We begin with the raw amino-acid sequence, 114 residues long: Putative membrane protein insertion efficiency factor (114 aa).

This sequence belongs to the UPF0161 family.

It is found in the cell inner membrane. Its function is as follows. Could be involved in insertion of integral membrane proteins into the membrane. This chain is Putative membrane protein insertion efficiency factor, found in Nitrobacter hamburgensis (strain DSM 10229 / NCIMB 13809 / X14).